A 421-amino-acid chain; its full sequence is 2',3'-cyclic-nucleotide 3'-phosphodiesterase (421 aa).

Ser6 and Ser9 each carry phosphoserine. Residue Tyr110 is modified to Phosphotyrosine. Ser170 bears the Phosphoserine mark. His251 functions as the Proton acceptor in the catalytic mechanism. Thr253 is a substrate binding site. His330 serves as the catalytic Proton donor. Thr332 is a substrate binding site. A Phosphoserine modification is found at Ser359. Cys418 carries the post-translational modification Cysteine methyl ester. Cys418 carries S-farnesyl cysteine lipidation. The propeptide at 419–421 (TII) is removed in mature form.

This sequence belongs to the 2H phosphoesterase superfamily. CNPase family. Exists as monomers and homodimers.

It is found in the membrane. Its subcellular location is the melanosome. The catalysed reaction is a nucleoside 2',3'-cyclic phosphate + H2O = a nucleoside 2'-phosphate + H(+). Its function is as follows. Catalyzes the formation of 2'-nucleotide products from 2',3'-cyclic substrates. May participate in RNA metabolism in the myelinating cell, CNP is the third most abundant protein in central nervous system myelin. This is 2',3'-cyclic-nucleotide 3'-phosphodiesterase from Pongo abelii (Sumatran orangutan).